The following is a 389-amino-acid chain: Acetyl-CoA:oxalate CoA-transferase (389 aa).

Residue His237 is part of the active site.

As to quaternary structure, homodimer.

The catalysed reaction is oxalate + acetyl-CoA = oxalyl-CoA + acetate. Involved in the catabolism of oxalate and in the adapatation to low pH. ACOCT serves to prime the oxalate-induced acid tolerance response (ATR) cycle by producing substrate for oxalyl-CoA decarboxylase (OXC) and formyl-coenzyme A transferase (FCOCT). Catalyzes the reversible conversion of acetyl-CoA and oxalate to oxalyl-CoA and acetate. It can also use formyl-CoA and oxalate to produce oxalyl-CoA and formate with significantly reduced specific activity. The protein is Acetyl-CoA:oxalate CoA-transferase (uctC) of Acetobacter aceti.